The primary structure comprises 451 residues: BAHD acyltransferase At3g29680 (451 aa).

Catalysis depends on proton acceptor residues H161 and D393.

Belongs to the plant acyltransferase family.

The protein is BAHD acyltransferase At3g29680 of Arabidopsis thaliana (Mouse-ear cress).